The primary structure comprises 229 residues: MSHGDSNPAAVPHAADDIQGDDRWMSQHNRFVSDCKDKEPDVLFVGDSMVQLLQQYEIWRELFSPLHALNFWIGGDTTGHVLWRLKNGELENIKPKVIVVWVGTNNYGNTAEEVAGGIEAIVRLINTQQPQAKVIVLGLLPRGEKPNPLRQKNAKVNHLLKASLPKLPNVQLLDVDAGFVHSDGTISYHDMFDFLHLTGGAYAKICKPLHELIMQLLEETPEEKRAALA.

Catalysis depends on residues serine 48, aspartate 193, and histidine 196.

It belongs to the 'GDSL' lipolytic enzyme family. Platelet-activating factor acetylhydrolase IB beta/gamma subunits subfamily. In terms of assembly, forms a catalytic dimer which is either homodimer (alpha2/alpha2 homodimer) or heterodimer with PAFAH1B3 (alpha2/alpha1 heterodimer). Component of the cytosolic (PAF-AH (I)) heterotetrameric enzyme, which is composed of PAFAH1B1 (beta), PAFAH1B2 (alpha2) and PAFAH1B3 (alpha1) subunits. The catalytic activity of the enzyme resides in the alpha1 (PAFAH1B3) and alpha2 (PAFAH1B2) subunits, whereas the beta subunit (PAFAH1B1) has regulatory activity. Trimer formation is not essential for the catalytic activity.

It localises to the cytoplasm. The enzyme catalyses a 1-O-alkyl-2-acetyl-sn-glycero-3-phosphocholine + H2O = a 1-O-alkyl-sn-glycero-3-phosphocholine + acetate + H(+). It catalyses the reaction 1-O-hexadecyl-2-acetyl-sn-glycero-3-phosphocholine + H2O = 1-O-hexadecyl-sn-glycero-3-phosphocholine + acetate + H(+). The catalysed reaction is 1-O-hexadecyl-2-acetyl-sn-glycero-3-phosphate + H2O = 1-O-hexadecyl-sn-glycero-3-phosphate + acetate + H(+). It carries out the reaction 1-O-hexadecyl-2-acetyl-sn-glycero-3-phosphoethanolamine + H2O = 1-O-hexadecyl-sn-glycero-3-phosphoethanolamine + acetate + H(+). Its function is as follows. Alpha2 catalytic subunit of the cytosolic type I platelet-activating factor (PAF) acetylhydrolase (PAF-AH (I)) heterotetrameric enzyme that catalyzes the hydrolyze of the acetyl group at the sn-2 position of PAF and its analogs and modulates the action of PAF. In Gallus gallus (Chicken), this protein is Platelet-activating factor acetylhydrolase IB subunit alpha2 (PAFAH1B2).